A 579-amino-acid chain; its full sequence is MRLFLLLVGLTTVIADDLPPTCIRPVYCNSTLLHYVQMARLYPDSKTFVDFQMRKDENATLSAFQELLDRTNHNPTKEDLQEFVVDFFDETSELEEWKPDDHKENPPFLAKIRDQGFREFAKALNDIWPTLARRVKPSVLEKPEQSSLVPMTHGFIVPGGRFKEIYYWDAYWIIEGLLITDMTETAKGMIENLIELLYKFGHIPNGSRWYYQERSQPPLLAAMIKLYYEKTKDIEFIRKYISALEKELEYWLDTHLIAFNKDDRVYTLLRYYIPSAGPRPESYYEDYELAQKLDKNTDPNDIYADLKSAAESGWDFSTRWFISESGDNSGNLTNLNTKNVIPVDLNAIFAGALQITANFQAILKNPRRAAHWGYMAEQWRSSIEQALWDEEDGVWHDYDILNNKPRRYFYTSNLAPLWMNAVEKPFLAKHGARVLEYLHESQALEYPGGVPVSLVNSGEQWDFPNAWPPEVSIVVTAIQNIGSEESSKLAKELAQVWVRACKSGFTEKKQMFEKYDALNAGKYGGGGEYTVQDGFGWSNGVVLEFLDRYGAVLTSVDSVDASANNGQSNEESETDSKEK.

The first 15 residues, 1-15 (MRLFLLLVGLTTVIA), serve as a signal peptide directing secretion. Residues asparagine 29 and asparagine 58 are each glycosylated (N-linked (GlcNAc...) asparagine). Substrate contacts are provided by residues arginine 161, 168–169 (WD), asparagine 205, 214–216 (RSQ), 279–281 (RPE), and glycine 313. N-linked (GlcNAc...) asparagine glycosylation occurs at asparagine 205. The Proton donor/acceptor role is filled by aspartate 315. N-linked (GlcNAc...) asparagine glycosylation is present at asparagine 331. The Proton donor/acceptor role is filled by glutamate 513. A substrate-binding site is contributed by glutamate 528. Positions 560-569 (DASANNGQSN) are enriched in polar residues. The tract at residues 560–579 (DASANNGQSNEESETDSKEK) is disordered.

Belongs to the glycosyl hydrolase 37 family. As to expression, in midgut and Malpighian tubules.

It localises to the basolateral cell membrane. The enzyme catalyses alpha,alpha-trehalose + H2O = alpha-D-glucose + beta-D-glucose. In terms of biological role, involved in uptake of hemolymph trehalose into epithelial cells in the midgut of feeding larvae. The polypeptide is Trehalase (Bombyx mori (Silk moth)).